The following is a 137-amino-acid chain: Sch210972 biosynthesis cluster protein E (137 aa).

The segment covering 1–12 has biased composition (polar residues); that stretch reads MTKYTSVNSSLP. A disordered region spans residues 1–137; the sequence is MTKYTSVNSS…ASTIRPPCCG (137 aa). A compositionally biased stretch (low complexity) spans 15–27; that stretch reads PRQTTPTRPATQT. Over residues 51–71 the composition is skewed to polar residues; that stretch reads GSLNGSPTLRTTLDTSLSGTR. Basic and acidic residues predominate over residues 94-109; sequence DEDHPHDPGPDSDAKK.

The protein operates within secondary metabolite biosynthesis. Its function is as follows. Part of the gene cluster that mediates the biosynthesis of the tetramic acid Sch210972, a potential anti-HIV fungal natural product that contains a decalin core. The PKS module of cghG together with the enoylreductase cghC catalyze the formation of the polyketide unit which is then conjugated to 4-hydroxyl-4-methyl glutamate (HMG) by the condensation domain of the cghG NRPS module. One unique structural feature of Sch210972 is the tetramic acid motif proposed to be derived from the non-proteinogenic amino acid HMG, by a Dieckmann-type condensation catalyzed by the reductase domain of cghG. The aldolase cghB catalyzes the aldol condensation of 2 molecules of pyruvic acid to yield the intermediate 4-hydroxyl-4-methyl-2-oxoglutarate (HMOG), which can then be stereoselectively transaminated by an unidentified enzyme to form HMG. The Diels-Alderase cghA then uses the Dieckmann product released by cghG as substrate and catalyzes the Diels-Alder cycloaddition to form the decalin ring of Sch210972. CghA also suppresses the nonenzymatic formation of the alternative stereoisomer. This is Sch210972 biosynthesis cluster protein E from Chaetomium globosum (strain ATCC 6205 / CBS 148.51 / DSM 1962 / NBRC 6347 / NRRL 1970) (Soil fungus).